The primary structure comprises 50 residues: Kappa-actitoxin-Bcs4a (50 aa).

It belongs to the sea anemone type 5 potassium channel toxin family. Post-translationally, contains 4 disulfide bonds.

It is found in the secreted. Its subcellular location is the nematocyst. Its function is as follows. Inhibits voltage-gated potassium channels (Kv1/KCNA). Is potent on Drosophila Shaker IR channels (IC(50)=94.25 nM), and rKv1.2/KCNA2 (IC(50)=172.59 nM), and moderately active on hKv1.3/KCNA3 (IC(50)=1006.48 nM), rKv1.6/KCNA6 (IC(50)=2245.93 nM), and Kv1.1/KCNA1 (IC(50) around 3 uM). In vivo, induces a rapid increase in swimming speed on zebrafish larvae, as well as death which occurs between 2 and 18 hours later. Also paralyzes swimming crabs (C.danae) when injected at the junction between the body and the walking leg. In Bunodosoma caissarum (Sea anemone), this protein is Kappa-actitoxin-Bcs4a.